A 134-amino-acid polypeptide reads, in one-letter code: MLFYVVITLVAGTVSGLNVRCNNPHTANCENGAKLESYFREGETCVGSPACPGEGYATKEDCQKACFPGGGDHSTNVDSSCFGQPPTSCETGAEVTYYDSGSRTCKVLQHGCPSSENAFDSEIECQVACGVSME.

The first 16 residues, 1 to 16 (MLFYVVITLVAGTVSG), serve as a signal peptide directing secretion. Residues 17–69 (LNVRCNNPHTANCENGAKLESYFREGETCVGSPACPGEGYATKEDCQKACFPG) form the BPTI/Kunitz inhibitor 1 domain. 6 disulfides stabilise this stretch: C21/C66, C29/C51, C45/C62, C81/C129, C89/C112, and C105/C125. The interval 70–82 (GGDHSTNVDSSCF) is linker. Positions 83 to 129 (GQPPTSCETGAEVTYYDSGSRTCKVLQHGCPSSENAFDSEIECQVAC) constitute a BPTI/Kunitz inhibitor domain.

Expressed in salivary glands.

The protein resides in the cytoplasmic vesicle. It is found in the secretory vesicle. It localises to the secreted. Its function is as follows. Tick salivary thrombin inhibitor that plays an important part in the anti-hemostatic strategy of ticks. Inhibits thrombin-induced platelet aggregation, but has no effect on ADP- or collagen-induced aggregation. Is a competitive, slow-, tight-binding inhibitor of thrombin (Ki=4.89 pM). It requires thrombin fibrinogen-binding exosite for optimal inhibition, as its affinity for thrombin lacking the exosite is much lower (Ki=22.3 nM). Its N-terminal amino acid residues may bind inside the active site cleft of thrombin, while its C-terminal domain may interact with the basic fibrinogen recognition exosite of thrombin. It does not inhibit plasmin, factor Xa (F10), and trypsin. The sequence is that of Thrombin inhibitor savignin from Ornithodoros kalahariensis (Tick).